A 402-amino-acid polypeptide reads, in one-letter code: Queuine tRNA-ribosyltransferase-like protein (402 aa).

This sequence belongs to the queuine tRNA-ribosyltransferase family.

In Theileria parva (East coast fever infection agent), this protein is Queuine tRNA-ribosyltransferase-like protein.